The sequence spans 179 residues: MSRIGKAEIKLPDKVEVKQENANIKVKGPLGELSTPIFEGLSVKNENGIVKLERSNEDQKVVALHGLTRALLMNCVKGVSQGWEKNLEINGVGYRAQKRGEDLVMSLGYSHEVVYKAPKGIKIDVQEQLKIKVTGIDKQLVGQVAADIRSKRPPEPYKGKGIKYAEEFIKKKAGKTGKK.

Belongs to the universal ribosomal protein uL6 family. As to quaternary structure, part of the 50S ribosomal subunit.

Functionally, this protein binds to the 23S rRNA, and is important in its secondary structure. It is located near the subunit interface in the base of the L7/L12 stalk, and near the tRNA binding site of the peptidyltransferase center. This is Large ribosomal subunit protein uL6 from Leptospira borgpetersenii serovar Hardjo-bovis (strain JB197).